Reading from the N-terminus, the 140-residue chain is ATP synthase epsilon chain (140 aa).

It belongs to the ATPase epsilon chain family. In terms of assembly, F-type ATPases have 2 components, CF(1) - the catalytic core - and CF(0) - the membrane proton channel. CF(1) has five subunits: alpha(3), beta(3), gamma(1), delta(1), epsilon(1). CF(0) has three main subunits: a, b and c.

It localises to the cell inner membrane. Functionally, produces ATP from ADP in the presence of a proton gradient across the membrane. This Chromobacterium violaceum (strain ATCC 12472 / DSM 30191 / JCM 1249 / CCUG 213 / NBRC 12614 / NCIMB 9131 / NCTC 9757 / MK) protein is ATP synthase epsilon chain.